The primary structure comprises 343 residues: F17c-G fimbrial adhesin (343 aa).

The N-terminal stretch at 1-22 (MTNFYKVFLAVFILVCCNISHA) is a signal peptide. Positions 23 to 199 (AVSFIGSTEN…LNPFTLNDTV (177 aa)) are receptor-binding lectin domain. Residues 65–66 (AN), 110–111 (DT), and 138–141 (STQG) each bind a carbohydrate. Cys75 and Cys132 are disulfide-bonded. The interval 200 to 343 (TSCRLLTPSA…GISTFTFSYQ (144 aa)) is fimbrillin-binding domain. The disordered stretch occupies residues 287–307 (LKFGPDSPVKGNENQWQLSTG). The segment covering 298-307 (NENQWQLSTG) has biased composition (polar residues).

This sequence belongs to the fimbrial protein family.

The protein resides in the fimbrium. In terms of biological role, essential fimbrial adhesion factor that mediates binding to N-acetylglucosamine-containing receptors in the host intestinal microvilli, leading to colonization of the intestinal tissue, and diarrhea or septicemia. Also confers adhesiveness to laminin and basement membranes. The polypeptide is F17c-G fimbrial adhesin (f17cG) (Escherichia coli).